Reading from the N-terminus, the 407-residue chain is Cytochrome P450 NovI (407 aa).

Residue C357 coordinates heme.

Belongs to the cytochrome P450 family. Requires heme as cofactor.

It functions in the pathway antibiotic biosynthesis; novobiocin biosynthesis. Its function is as follows. Together with NovH, involved in the formation of a beta-OH-Tyr intermediate in the novobiocin biosynthesis pathway, an aminocoumarin family antibiotic that targets bacterial DNA gyrases. Acts as a cytochrome P450-type monooxygenase with specificity for the tyrosyl-S-NovH acyl enzyme (L-Tyr-S-NovH) to form the beta-OH-Tyr intermediate (L-beta-OH-Tyr-S-NovH). In Streptomyces niveus (Streptomyces spheroides), this protein is Cytochrome P450 NovI (novI).